The chain runs to 310 residues: ADP-L-glycero-D-manno-heptose-6-epimerase (310 aa).

NADP(+)-binding positions include 10–11 (FI), 31–32 (DN), Lys38, Lys53, 75–79 (EGACS), and Asn92. Tyr140 functions as the Proton acceptor in the catalytic mechanism. Lys144 lines the NADP(+) pocket. Asn169 contacts substrate. NADP(+)-binding residues include Val170 and Lys178. Lys178 acts as the Proton acceptor in catalysis. Substrate is bound by residues Ser180, His187, 201 to 204 (FEGS), Arg209, and Tyr272.

The protein belongs to the NAD(P)-dependent epimerase/dehydratase family. HldD subfamily. Homopentamer. NADP(+) serves as cofactor.

The enzyme catalyses ADP-D-glycero-beta-D-manno-heptose = ADP-L-glycero-beta-D-manno-heptose. It participates in nucleotide-sugar biosynthesis; ADP-L-glycero-beta-D-manno-heptose biosynthesis; ADP-L-glycero-beta-D-manno-heptose from D-glycero-beta-D-manno-heptose 7-phosphate: step 4/4. Its function is as follows. Catalyzes the interconversion between ADP-D-glycero-beta-D-manno-heptose and ADP-L-glycero-beta-D-manno-heptose via an epimerization at carbon 6 of the heptose. This is ADP-L-glycero-D-manno-heptose-6-epimerase from Klebsiella pneumoniae (strain 342).